Here is a 728-residue protein sequence, read N- to C-terminus: tRNA (guanine(27)-N(2))-dimethyltransferase (728 aa).

Residues 1–10 are compositionally biased toward acidic residues; that stretch reads MENMAEEELL. Disordered stretches follow at residues 1–78 and 98–118; these read MENM…SKRH and DVDS…SQTC. Threonine 23 bears the Phosphothreonine mark. Over residues 23–33 the composition is skewed to pro residues; sequence TPAPDSAPVPA. The segment covering 34-46 has biased composition (low complexity); the sequence is PAADTALDSAPTP. Residues 47 to 61 show a composition bias toward pro residues; it reads DSDPAPALAPAPAPA. Serine 63 is modified (phosphoserine). Polar residues predominate over residues 101–118; sequence SASSLNSDNPGTENSQTC. The Nucleolar localization signal motif lies at 132–136; it reads HKLRR. A C2H2-type zinc finger spans residues 181–203; the sequence is YHCIICSATITRRTDMLGHVKRH. A Trm1 methyltransferase domain is found at 224 to 683; sequence EILKETDTDI…APLMQFKSIL (460 aa). Arginine 257, aspartate 304, aspartate 352, and alanine 353 together coordinate S-adenosyl-L-methionine. Positions 483, 486, 508, and 510 each coordinate Zn(2+). Residue lysine 580 forms a Glycyl lysine isopeptide (Lys-Gly) (interchain with G-Cter in SUMO2) linkage. Position 607 is a phosphoserine (serine 607). Positions 693–728 are disordered; the sequence is GAQSEGQMPPAAEDTVTDRVEMSVSDKAEASGCRRW. Residues 708–721 are compositionally biased toward basic and acidic residues; sequence VTDRVEMSVSDKAE.

It belongs to the class I-like SAM-binding methyltransferase superfamily. Trm1 family. As to expression, expressed in various neuronal structures during embryonic development, including spinal ganglia, trigeminal nerve and ganglion, olfactory and nasopharyngeal epithelium, nuclei of the metencephalon, thalamus and medulla oblongata. Also expressed in lung, esophagus, epiglottis, ependyma, vertebral column, spinal cord and brown adipose tissue. Expression persists in the adult brain with dynamically changing patterns in cortex and cerebellum.

It localises to the nucleus. The protein resides in the nucleolus. The catalysed reaction is guanosine(27) in tRNA(Tyr) + 2 S-adenosyl-L-methionine = N(2)-dimethylguanosine(27) in tRNA(Tyr) + 2 S-adenosyl-L-homocysteine + 2 H(+). In terms of biological role, specifically dimethylates a single guanine residue at position 27 of tRNA(Tyr) using S-adenosyl-L-methionine as donor of the methyl groups. Dimethylation at position 27 of tRNA(Tyr) is required for efficient translation of tyrosine codons. Also required to maintain 3-(3-amino-3-carboxypropyl)uridine (acp3U) in the D-loop of several cytoplasmic tRNAs. May play a role in motor coordination and exploratory behavior. This Mus musculus (Mouse) protein is tRNA (guanine(27)-N(2))-dimethyltransferase.